The primary structure comprises 158 residues: Transcription elongation factor GreA (158 aa).

It belongs to the GreA/GreB family.

Necessary for efficient RNA polymerase transcription elongation past template-encoded arresting sites. The arresting sites in DNA have the property of trapping a certain fraction of elongating RNA polymerases that pass through, resulting in locked ternary complexes. Cleavage of the nascent transcript by cleavage factors such as GreA or GreB allows the resumption of elongation from the new 3'terminus. GreA releases sequences of 2 to 3 nucleotides. The chain is Transcription elongation factor GreA from Rhizobium etli (strain CIAT 652).